We begin with the raw amino-acid sequence, 286 residues long: Small ribosomal subunit protein uS2 (286 aa).

Residues 231 to 286 (ERAQAEAKAAAGDNDAPVSSEGESTEVASDAASTASETTATSSDESAAESSEAESK) form a disordered region. A compositionally biased stretch (low complexity) spans 255–280 (TEVASDAASTASETTATSSDESAAES).

The protein belongs to the universal ribosomal protein uS2 family.

This is Small ribosomal subunit protein uS2 from Corynebacterium kroppenstedtii (strain DSM 44385 / JCM 11950 / CIP 105744 / CCUG 35717).